Here is a 600-residue protein sequence, read N- to C-terminus: Transcription factor efl-3 (600 aa).

The tract at residues 35-65 (LPEPRVNRTTDPDHENLLPSPVPRPSPAMSQ) is disordered. The segment covering 39-50 (RVNRTTDPDHEN) has biased composition (basic and acidic residues). 2 DNA-binding regions span residues 95–164 (RKEK…QWQG) and 253–343 (RDRQ…VYCG).

Belongs to the E2F/DP family.

It localises to the nucleus. Probable transcription factor which represses gene expression in a subset of ventral nerve cord neurons. Involved in regulating programmed cell death and determining cell fate during development, acting in a partially redundant manner with lin-39 to repress the BH3 domain-encoding gene egl-1 in the VA and VB motor neurons. In Caenorhabditis elegans, this protein is Transcription factor efl-3.